The primary structure comprises 126 residues: Large ribosomal subunit protein bL12 (126 aa).

It belongs to the bacterial ribosomal protein bL12 family. As to quaternary structure, homodimer. Part of the ribosomal stalk of the 50S ribosomal subunit. Forms a multimeric L10(L12)X complex, where L10 forms an elongated spine to which 2 to 4 L12 dimers bind in a sequential fashion. Binds GTP-bound translation factors.

Its function is as follows. Forms part of the ribosomal stalk which helps the ribosome interact with GTP-bound translation factors. Is thus essential for accurate translation. The chain is Large ribosomal subunit protein bL12 from Coxiella burnetii (strain CbuK_Q154) (Coxiella burnetii (strain Q154)).